Here is a 421-residue protein sequence, read N- to C-terminus: Protein PHLOEM UNLOADING MODULATOR (421 aa).

7 consecutive transmembrane segments (helical) span residues 30–50, 60–80, 124–144, 158–178, 286–306, 323–343, and 397–417; these read LMPV…LFYK, IPFL…ALCV, HIIG…SVVF, YIFT…STIL, AMAW…LFVA, CIVA…IWSA, and TVFA…ALTL.

The protein belongs to the sphingomyelin synthase family.

Its subcellular location is the membrane. It functions in the pathway sphingolipid metabolism. Functionally, catalyzes the biosynthesis of sphingolipids with very long-chain fatty acid (VLCFA). Required for the formation of plasmodesmal cytoplasmic sleeve during the transition from type I to type II plasmodesmata to modulate post-sieve elements (SE) unloading and symplastic cell-to-cell molecular trafficking at the phloem pole pericycle (PPP)-endodermis interface in roots. The chain is Protein PHLOEM UNLOADING MODULATOR from Arabidopsis thaliana (Mouse-ear cress).